Reading from the N-terminus, the 356-residue chain is 1-deoxy-D-xylulose 5-phosphate reductoisomerase (356 aa).

NADPH contacts are provided by threonine 7, glycine 8, serine 9, isoleucine 10, glycine 31, asparagine 33, and asparagine 111. Lysine 112 contributes to the 1-deoxy-D-xylulose 5-phosphate binding site. Glutamate 113 provides a ligand contact to NADPH. Aspartate 131 contacts Mn(2+). Serine 132, glutamate 133, serine 155, and histidine 178 together coordinate 1-deoxy-D-xylulose 5-phosphate. Glutamate 133 contacts Mn(2+). Position 184 (glycine 184) interacts with NADPH. Positions 191, 196, 197, and 200 each coordinate 1-deoxy-D-xylulose 5-phosphate. Glutamate 200 serves as a coordination point for Mn(2+).

It belongs to the DXR family. The cofactor is Mg(2+). Mn(2+) serves as cofactor.

It catalyses the reaction 2-C-methyl-D-erythritol 4-phosphate + NADP(+) = 1-deoxy-D-xylulose 5-phosphate + NADPH + H(+). The protein operates within isoprenoid biosynthesis; isopentenyl diphosphate biosynthesis via DXP pathway; isopentenyl diphosphate from 1-deoxy-D-xylulose 5-phosphate: step 1/6. In terms of biological role, catalyzes the NADPH-dependent rearrangement and reduction of 1-deoxy-D-xylulose-5-phosphate (DXP) to 2-C-methyl-D-erythritol 4-phosphate (MEP). The sequence is that of 1-deoxy-D-xylulose 5-phosphate reductoisomerase from Campylobacter jejuni (strain RM1221).